Consider the following 473-residue polypeptide: O-methyltransferase aclU (473 aa).

Residues D320 and 354 to 356 each bind S-adenosyl-L-methionine; that span reads GDF. The active-site Proton acceptor is the H373.

Belongs to the class I-like SAM-binding methyltransferase superfamily. Cation-independent O-methyltransferase family. COMT subfamily.

The protein operates within mycotoxin biosynthesis. In terms of biological role, O-methyltransferase; part of the gene cluster that mediates the biosynthesis of aspirochlorine (or antibiotic A30641), an unusual halogenated spiro compound with distinctive antifungal properties due to selective inhibition of protein biosynthesis, and which is also active against bacteria, viruses, and murine tumor cells. The non-ribosomal peptide synthetase (NRPS) aclP is responsible the formation of the diketopiperazine (DKP) core from the condensation of 2 phenylalanine residues. One Phe residue is tailored into chlorotyrosine by hydroxylation and chlorination, whereas the second Phe undergoes an unprecedented C-C bond cleavage to be converted into glycine. After formation of the DKP, sulfur is incorporated into the DKP by conjugation with glutathione by aclG, followed by its stepwise degradation to the thiol by aclI, aclJ and aclK, and the dithiol oxidation by aclT. In addition, oxygenases (aclB, aclC, aclL and aclO) and O-methyltransferases (aclM and aclU) act as tailoring enzymes to produce the intermediate dechloroaspirochlorine. Ultimately, chlorination of dechloroaspirochlorine by the halogenase aclH is the last step in the aspirochlorine pathway. This Aspergillus oryzae (strain ATCC 42149 / RIB 40) (Yellow koji mold) protein is O-methyltransferase aclU.